Consider the following 388-residue polypeptide: NADH-quinone oxidoreductase subunit D 2 (388 aa).

Belongs to the complex I 49 kDa subunit family. As to quaternary structure, NDH-1 is composed of 14 different subunits. Subunits NuoB, C, D, E, F, and G constitute the peripheral sector of the complex.

The protein localises to the cell inner membrane. It catalyses the reaction a quinone + NADH + 5 H(+)(in) = a quinol + NAD(+) + 4 H(+)(out). Its function is as follows. NDH-1 shuttles electrons from NADH, via FMN and iron-sulfur (Fe-S) centers, to quinones in the respiratory chain. The immediate electron acceptor for the enzyme in this species is believed to be ubiquinone. Couples the redox reaction to proton translocation (for every two electrons transferred, four hydrogen ions are translocated across the cytoplasmic membrane), and thus conserves the redox energy in a proton gradient. This is NADH-quinone oxidoreductase subunit D 2 from Sorangium cellulosum (strain So ce56) (Polyangium cellulosum (strain So ce56)).